Consider the following 239-residue polypeptide: Uridylate kinase (239 aa).

13–16 (KLSG) is a binding site for ATP. Residue G55 participates in UMP binding. ATP-binding residues include G56 and R60. Residues D75 and 136 to 143 (TGNPFFTT) each bind UMP. The ATP site is built by T163, Y169, and D172.

Belongs to the UMP kinase family. Homohexamer.

The protein localises to the cytoplasm. The enzyme catalyses UMP + ATP = UDP + ADP. It participates in pyrimidine metabolism; CTP biosynthesis via de novo pathway; UDP from UMP (UMPK route): step 1/1. With respect to regulation, inhibited by UTP. Functionally, catalyzes the reversible phosphorylation of UMP to UDP. The polypeptide is Uridylate kinase (Chromobacterium violaceum (strain ATCC 12472 / DSM 30191 / JCM 1249 / CCUG 213 / NBRC 12614 / NCIMB 9131 / NCTC 9757 / MK)).